Reading from the N-terminus, the 236-residue chain is 2,3,4,5-tetrahydropyridine-2,6-dicarboxylate N-acetyltransferase (236 aa).

This sequence belongs to the transferase hexapeptide repeat family. DapH subfamily.

The enzyme catalyses (S)-2,3,4,5-tetrahydrodipicolinate + acetyl-CoA + H2O = L-2-acetamido-6-oxoheptanedioate + CoA. It functions in the pathway amino-acid biosynthesis; L-lysine biosynthesis via DAP pathway; LL-2,6-diaminopimelate from (S)-tetrahydrodipicolinate (acetylase route): step 1/3. Functionally, catalyzes the transfer of an acetyl group from acetyl-CoA to tetrahydrodipicolinate. The chain is 2,3,4,5-tetrahydropyridine-2,6-dicarboxylate N-acetyltransferase from Thermotoga maritima (strain ATCC 43589 / DSM 3109 / JCM 10099 / NBRC 100826 / MSB8).